A 169-amino-acid polypeptide reads, in one-letter code: Large ribosomal subunit protein uL10 (169 aa).

The protein belongs to the universal ribosomal protein uL10 family. Part of the ribosomal stalk of the 50S ribosomal subunit. The N-terminus interacts with L11 and the large rRNA to form the base of the stalk. The C-terminus forms an elongated spine to which L12 dimers bind in a sequential fashion forming a multimeric L10(L12)X complex.

Forms part of the ribosomal stalk, playing a central role in the interaction of the ribosome with GTP-bound translation factors. The chain is Large ribosomal subunit protein uL10 from Rickettsia rickettsii (strain Iowa).